Reading from the N-terminus, the 237-residue chain is Probable transcriptional regulatory protein Bpro_2928 (237 aa).

The protein belongs to the TACO1 family.

The protein resides in the cytoplasm. The polypeptide is Probable transcriptional regulatory protein Bpro_2928 (Polaromonas sp. (strain JS666 / ATCC BAA-500)).